A 782-amino-acid chain; its full sequence is uncharacterized protein (782 aa).

2 disordered regions span residues 1–25 and 175–195; these read MFSP…STTS and RPRT…EDLR. A compositionally biased stretch (low complexity) spans 13–25; sequence ESESVSNCESTTS. The span at 183 to 195 shows a compositional bias: basic and acidic residues; it reads RAGDASMSREDLR. 4 coiled-coil regions span residues 223–331, 348–398, 428–601, and 699–743; these read RENR…STLN, LSQF…VSTL, NRIN…QLLN, and TIET…IIAK. A disordered region spans residues 748–782; that stretch reads NIPKTEKSSPMKKVPPIENFRAKSQTSITGLSPVL. Positions 769–782 are enriched in polar residues; sequence AKSQTSITGLSPVL.

This is an uncharacterized protein from Caenorhabditis elegans.